The sequence spans 72 residues: Small proline-rich protein 2B (72 aa).

Positions 1–11 (MSYQQQQCKQP) are enriched in low complexity. The tract at residues 1–20 (MSYQQQQCKQPCQPPPVCPT) is disordered. Tandem repeats lie at residues 21–29 (PKCPEPCPP), 30–38 (PKCPEPCPP), and 39–47 (PKCPQPCPP). A 3 X 9 AA tandem repeats of P-K-C-P-[EQ]-P-C-P-P region spans residues 21–47 (PKCPEPCPPPKCPEPCPPPKCPQPCPP). A disordered region spans residues 42-72 (PQPCPPQQCQQKYPPVTPSPPCQPKYPPKSK). Positions 56–72 (PVTPSPPCQPKYPPKSK) are enriched in pro residues.

The protein belongs to the cornifin (SPRR) family. Suprabasal layers of squamous-differentiated tissues such as epidermis, esophagus, tongue and trachea.

It is found in the cytoplasm. In terms of biological role, cross-linked envelope protein of keratinocytes. It is a keratinocyte protein that first appears in the cell cytosol, but ultimately becomes cross-linked to membrane proteins by transglutaminase. All that results in the formation of an insoluble envelope beneath the plasma membrane. In Homo sapiens (Human), this protein is Small proline-rich protein 2B (SPRR2B).